Here is a 334-residue protein sequence, read N- to C-terminus: DNA-directed RNA polymerase subunit alpha (334 aa).

Positions 1–233 (MADQTISNVL…NLFTPLVSQE (233 aa)) are alpha N-terminal domain (alpha-NTD). An alpha C-terminal domain (alpha-CTD) region spans residues 263–334 (DNENSYNLYN…QLKKRFKIQL (72 aa)).

The protein belongs to the RNA polymerase alpha chain family. In plastids the minimal PEP RNA polymerase catalytic core is composed of four subunits: alpha, beta, beta', and beta''. When a (nuclear-encoded) sigma factor is associated with the core the holoenzyme is formed, which can initiate transcription.

Its subcellular location is the plastid. The protein localises to the chloroplast. It catalyses the reaction RNA(n) + a ribonucleoside 5'-triphosphate = RNA(n+1) + diphosphate. Its function is as follows. DNA-dependent RNA polymerase catalyzes the transcription of DNA into RNA using the four ribonucleoside triphosphates as substrates. The polypeptide is DNA-directed RNA polymerase subunit alpha (Chaetosphaeridium globosum (Charophycean green alga)).